A 171-amino-acid polypeptide reads, in one-letter code: Co-chaperone protein HscB homolog (171 aa).

A J domain is found at 2-74 (NHFELFGLPS…ISRAEYILAE (73 aa)).

Belongs to the HscB family. As to quaternary structure, interacts with HscA and stimulates its ATPase activity.

Its function is as follows. Co-chaperone involved in the maturation of iron-sulfur cluster-containing proteins. Seems to help targeting proteins to be folded toward HscA. This Vibrio campbellii (strain ATCC BAA-1116) protein is Co-chaperone protein HscB homolog.